The sequence spans 492 residues: Proline--tRNA ligase (492 aa).

It belongs to the class-II aminoacyl-tRNA synthetase family. ProS type 3 subfamily. As to quaternary structure, homodimer.

It localises to the cytoplasm. It carries out the reaction tRNA(Pro) + L-proline + ATP = L-prolyl-tRNA(Pro) + AMP + diphosphate. Functionally, catalyzes the attachment of proline to tRNA(Pro) in a two-step reaction: proline is first activated by ATP to form Pro-AMP and then transferred to the acceptor end of tRNA(Pro). This Flavobacterium psychrophilum (strain ATCC 49511 / DSM 21280 / CIP 103535 / JIP02/86) protein is Proline--tRNA ligase.